The sequence spans 399 residues: Elongation factor Tu (399 aa).

One can recognise a tr-type G domain in the interval 10–204 (KPHVNIGTIG…AVDANIPEPE (195 aa)). Residues 19 to 26 (GHVDHGKT) are G1. 19 to 26 (GHVDHGKT) is a GTP binding site. Threonine 26 is a binding site for Mg(2+). A G2 region spans residues 60-64 (GITIN). The G3 stretch occupies residues 81–84 (DCPG). GTP-binding positions include 81-85 (DCPGH) and 136-139 (NKCD). Residues 136-139 (NKCD) form a G4 region. Positions 174 to 176 (SGL) are G5.

Belongs to the TRAFAC class translation factor GTPase superfamily. Classic translation factor GTPase family. EF-Tu/EF-1A subfamily. In terms of assembly, monomer.

The protein resides in the cytoplasm. It catalyses the reaction GTP + H2O = GDP + phosphate + H(+). Functionally, GTP hydrolase that promotes the GTP-dependent binding of aminoacyl-tRNA to the A-site of ribosomes during protein biosynthesis. This is Elongation factor Tu from Synechococcus sp. (strain WH7803).